Reading from the N-terminus, the 179-residue chain is Inner membrane-spanning protein YciB (179 aa).

5 consecutive transmembrane segments (helical) span residues 24-44 (TATG…YAME), 49-69 (AMQK…LVLH), 76-96 (WKPT…LWAL), 121-141 (VAWI…AAYF), and 151-171 (LWGY…ISPH).

Belongs to the YciB family.

Its subcellular location is the cell inner membrane. Plays a role in cell envelope biogenesis, maintenance of cell envelope integrity and membrane homeostasis. This is Inner membrane-spanning protein YciB from Variovorax paradoxus (strain S110).